Reading from the N-terminus, the 313-residue chain is uncharacterized protein (313 aa).

Positions 1–313 (MSRNGRNDYD…SSSRSGSSRR (313 aa)) are disordered. Basic and acidic residues-rich tracts occupy residues 24–33 (LARDRERDSE), 40–85 (TGER…DVKY), 95–116 (TTRE…DELG), and 156–181 (TDER…DEFG). Positions 194–205 (RGRRSNSRRRSS) are enriched in basic residues. Low complexity-rich tracts occupy residues 206–266 (NARS…GSKS) and 272–313 (SRSG…SSRR).

It is found in the virion. This is an uncharacterized protein from Acanthamoeba polyphaga mimivirus (APMV).